Reading from the N-terminus, the 445-residue chain is Chromosomal replication initiator protein DnaA (445 aa).

The tract at residues 1–73 (MSPNSTLWQT…NELATKYSST (73 aa)) is domain I, interacts with DnaA modulators. The interval 73 to 102 (TPVRLKFVSQEEVIEEPVADRKLTIDYRQG) is domain II. A domain III, AAA+ region region spans residues 103 to 323 (NLNSTYTFDS…GALIRLISYA (221 aa)). ATP is bound by residues Gly147, Gly149, Lys150, and Thr151. The interval 324–445 (QTFNLEITMN…KFAVDSIVKK (122 aa)) is domain IV, binds dsDNA.

The protein belongs to the DnaA family. In terms of assembly, oligomerizes as a right-handed, spiral filament on DNA at oriC.

It is found in the cytoplasm. Its function is as follows. Plays an essential role in the initiation and regulation of chromosomal replication. ATP-DnaA binds to the origin of replication (oriC) to initiate formation of the DNA replication initiation complex once per cell cycle. Binds the DnaA box (a 9 base pair repeat at the origin) and separates the double-stranded (ds)DNA. Forms a right-handed helical filament on oriC DNA; dsDNA binds to the exterior of the filament while single-stranded (ss)DNA is stabiized in the filament's interior. The ATP-DnaA-oriC complex binds and stabilizes one strand of the AT-rich DNA unwinding element (DUE), permitting loading of DNA polymerase. After initiation quickly degrades to an ADP-DnaA complex that is not apt for DNA replication. Binds acidic phospholipids. In Acholeplasma laidlawii, this protein is Chromosomal replication initiator protein DnaA.